A 1136-amino-acid chain; its full sequence is Mitochondrial 3' processome subunit 3 (1136 aa).

The transit peptide at 1–97 directs the protein to the mitochondrion; that stretch reads MKKAWAQLER…RGLVCTTVGD (97 aa).

In terms of assembly, component of the mitochondrial 3' processome (MPsome) complex composed at least of terminal uridylyltransferase KRET1/TUT1, 3'-5' exonuclease DSS1, MPSS1, MPSS2 and MPSS3. Within the complex, interacts with KRET1.

Its subcellular location is the mitochondrion. Its function is as follows. As part of the mitochondrial 3' processome (MPsome), involved in the maturation of guided RNA (gRNA) precursors. This Trypanosoma brucei brucei protein is Mitochondrial 3' processome subunit 3.